The following is a 560-amino-acid chain: Dihydroxy-acid dehydratase (560 aa).

Residue C52 coordinates [2Fe-2S] cluster. D84 contributes to the Mg(2+) binding site. C125 contacts [2Fe-2S] cluster. The Mg(2+) site is built by D126 and K127. K127 bears the N6-carboxylysine mark. A [2Fe-2S] cluster-binding site is contributed by C197. A Mg(2+)-binding site is contributed by E449. The Proton acceptor role is filled by S475.

The protein belongs to the IlvD/Edd family. In terms of assembly, homodimer. It depends on [2Fe-2S] cluster as a cofactor. The cofactor is Mg(2+).

It carries out the reaction (2R)-2,3-dihydroxy-3-methylbutanoate = 3-methyl-2-oxobutanoate + H2O. It catalyses the reaction (2R,3R)-2,3-dihydroxy-3-methylpentanoate = (S)-3-methyl-2-oxopentanoate + H2O. It functions in the pathway amino-acid biosynthesis; L-isoleucine biosynthesis; L-isoleucine from 2-oxobutanoate: step 3/4. It participates in amino-acid biosynthesis; L-valine biosynthesis; L-valine from pyruvate: step 3/4. In terms of biological role, functions in the biosynthesis of branched-chain amino acids. Catalyzes the dehydration of (2R,3R)-2,3-dihydroxy-3-methylpentanoate (2,3-dihydroxy-3-methylvalerate) into 2-oxo-3-methylpentanoate (2-oxo-3-methylvalerate) and of (2R)-2,3-dihydroxy-3-methylbutanoate (2,3-dihydroxyisovalerate) into 2-oxo-3-methylbutanoate (2-oxoisovalerate), the penultimate precursor to L-isoleucine and L-valine, respectively. The sequence is that of Dihydroxy-acid dehydratase from Sulfurisphaera tokodaii (strain DSM 16993 / JCM 10545 / NBRC 100140 / 7) (Sulfolobus tokodaii).